Reading from the N-terminus, the 666-residue chain is ATP synthase subunit alpha 2 (666 aa).

Glycine 182–threonine 189 serves as a coordination point for ATP. Residues methionine 527–arginine 666 are disordered. Over residues alanine 545–alanine 590 the composition is skewed to basic and acidic residues. Low complexity predominate over residues alanine 591–proline 601. Positions alanine 623–alanine 641 are enriched in basic and acidic residues.

This sequence belongs to the ATPase alpha/beta chains family. As to quaternary structure, F-type ATPases have 2 components, CF(1) - the catalytic core - and CF(0) - the membrane proton channel. CF(1) has five subunits: alpha(3), beta(3), gamma(1), delta(1), epsilon(1). CF(0) has three main subunits: a(1), b(2) and c(9-12). The alpha and beta chains form an alternating ring which encloses part of the gamma chain. CF(1) is attached to CF(0) by a central stalk formed by the gamma and epsilon chains, while a peripheral stalk is formed by the delta and b chains.

It localises to the cell inner membrane. It catalyses the reaction ATP + H2O + 4 H(+)(in) = ADP + phosphate + 5 H(+)(out). In terms of biological role, produces ATP from ADP in the presence of a proton gradient across the membrane. The alpha chain is a regulatory subunit. The sequence is that of ATP synthase subunit alpha 2 from Burkholderia pseudomallei (strain 1106a).